Here is a 702-residue protein sequence, read N- to C-terminus: Protein sepa-1 (702 aa).

Residues 39–160 form a required for self-association and interaction with pgl-3 region; sequence RQRFCYEKTD…KESTSYGQFR (122 aa). 3 short sequence motifs (LIR) span residues 107–110, 247–250, and 298–301; these read FVEV, FQKI, and FGFV. A disordered region spans residues 450–471; that stretch reads AKDPEEPTTAASEGGNTYGYQE. The span at 458–468 shows a compositional bias: polar residues; that stretch reads TAASEGGNTYG. Positions 469–472 match the LIR 4 motif; that stretch reads YQEL. The stretch at 508-543 forms a coiled coil; it reads AAMDKKKKRRELKSRLNKINAQIDELEKRRMERAGK. Residues 545–564 are disordered; that stretch reads QVVSSSVPSEEAAQVEAPAS. The region spanning 597–674 is the KIX domain; that stretch reads NTSKEWIVED…TVDQILKKTL (78 aa). Positions 675–685 are enriched in basic and acidic residues; that stretch reads KKDQRATEHNH. Residues 675–702 are disordered; it reads KKDQRATEHNHQQPTQSSDELAKNHEKN.

In terms of assembly, self-associates. Interacts (via the LIR motifs) with lgg-1; the interaction is direct. Interacts (via the LIR motifs) with lgg-2; the interaction is direct. Interacts with pgl-3; interaction is enhanced in the presence of RNA. Interacts with epg-2; may be modulated by prmt-1. In terms of processing, degraded by autophagy.

It localises to the nucleus. Its subcellular location is the cytoplasm. The protein resides in the cytoplasmic granule. Functionally, adapter protein that connects P-granules in somatic cells with the autophagic machinery. Association with other adapters such as epg-2 and P-granule components such as pgl-3 is required for the accumulation and degradation of P-granules by autophagy in somatic cells. This ensures exclusive localization of the P-granules in germ cells. The sequence is that of Protein sepa-1 from Caenorhabditis elegans.